We begin with the raw amino-acid sequence, 737 residues long: Protein bicaudal D homolog (737 aa).

3 coiled-coil regions span residues 1 to 255, 292 to 319, and 547 to 684; these read MAES…RNAE, GSSD…EKIF, and AENE…DRDR. The disordered stretch occupies residues 72–97; it reads YRSQHQRSTRSELENEESLLEESSAK. The interval 686-737 is disordered; the sequence is VFKRSSTRAPTRETYQPPRAVRYPGSTTTAQQPAPSSSGGSRGGPRRGDNQQ. Residues 710-719 are compositionally biased toward polar residues; the sequence is GSTTTAQQPA.

It belongs to the BicD family. As to quaternary structure, component of a dynein-regulating complex composed of at least bicd-1, dlc-1 and egal-1. Interacts with egal-1 and unc-83. As to expression, expressed in the excretory cell, body wall muscles, vulval muscle cells, PVD and FLP sensory neurons and AVF interneurons.

It localises to the nucleus envelope. The protein localises to the perikaryon. Its subcellular location is the cell projection. The protein resides in the dendrite. Part of a complex with dlc-1 and egal-1, which is recruited to the nuclear envelope by unc-83, where in turn, it recruits dynein to the nuclear surface and regulates nuclear migration in hypodermal precursor cells. Required for the formation of dendritic branches of PVD sensory neurons. The chain is Protein bicaudal D homolog from Caenorhabditis elegans.